A 59-amino-acid chain; its full sequence is Large ribosomal subunit protein bL32 (59 aa).

The segment at 1-59 (MAVQQNRKSRSRRGMRRSHDALSSAALSIDPTTGEKHRRHHVTPDGFYRGKKVVEVSQD) is disordered. A compositionally biased stretch (basic residues) spans 7–16 (RKSRSRRGMR).

It belongs to the bacterial ribosomal protein bL32 family.

The protein is Large ribosomal subunit protein bL32 of Hahella chejuensis (strain KCTC 2396).